Here is a 507-residue protein sequence, read N- to C-terminus: RNA-splicing ligase RtcB homolog (507 aa).

Positions 121, 124, 229, 261, and 355 each coordinate Mn(2+). Asparagine 228–glutamate 232 provides a ligand contact to GMP. GMP is bound by residues histidine 355–asparagine 356, glycine 404–methionine 407, serine 411, histidine 430–glycine 433, and lysine 506. Histidine 430 serves as the catalytic GMP-histidine intermediate.

Belongs to the RtcB family. In terms of assembly, catalytic component of the tRNA-splicing ligase complex. Mn(2+) serves as cofactor.

The enzyme catalyses a 3'-end 3'-phospho-ribonucleotide-RNA + a 5'-end dephospho-ribonucleoside-RNA + GTP = a ribonucleotidyl-ribonucleotide-RNA + GMP + diphosphate. It catalyses the reaction a 3'-end 2',3'-cyclophospho-ribonucleotide-RNA + a 5'-end dephospho-ribonucleoside-RNA + GTP + H2O = a ribonucleotidyl-ribonucleotide-RNA + GMP + diphosphate + H(+). In terms of biological role, catalytic subunit of the tRNA-splicing ligase complex that acts by directly joining spliced tRNA halves to mature-sized tRNAs by incorporating the precursor-derived splice junction phosphate into the mature tRNA as a canonical 3',5'-phosphodiester. May act as an RNA ligase with broad substrate specificity, and may function toward other RNAs. The chain is RNA-splicing ligase RtcB homolog from Micromonas pusilla (strain CCMP1545) (Picoplanktonic green alga).